We begin with the raw amino-acid sequence, 2012 residues long: Cell adhesion molecule DSCAM (2012 aa).

Positions 1-17 are cleaved as a signal peptide; sequence MWILALSLFQSFANVFS. Over 18–1595 the chain is Extracellular; that stretch reads EDLHSSLYFV…GLTTNEGLKM (1578 aa). Asn-28 and Asn-78 each carry an N-linked (GlcNAc...) asparagine glycan. 9 consecutive Ig-like C2-type domains span residues 39 to 129, 125 to 216, 225 to 305, 313 to 401, 407 to 500, 504 to 592, 596 to 685, 690 to 783, and 787 to 883; these read TTGT…YTVR, PYTV…ARLF, PSIL…AKVI, PLKA…VQVV, PKII…ARIN, PASI…VHVT, PPFI…SQLI, PKFV…MYLT, and PAMI…LTVQ. Disulfide bonds link Cys-46/Cys-102, Cys-145/Cys-197, Cys-246/Cys-293, Cys-335/Cys-385, and Cys-428/Cys-484. 9 N-linked (GlcNAc...) asparagine glycosylation sites follow: Asn-470, Asn-487, Asn-512, Asn-556, Asn-658, Asn-666, Asn-710, Asn-748, and Asn-795. Intrachain disulfides connect Cys-525-Cys-575 and Cys-617-Cys-669. An intrachain disulfide couples Cys-711 to Cys-766. Residues Cys-809 and Cys-865 are joined by a disulfide bond. Fibronectin type-III domains are found at residues 885 to 982, 987 to 1086, 1091 to 1187, and 1191 to 1285; these read PPDP…ADEA, PPQE…TLED, PPEN…TKED, and PPAG…AKAP. Asn-924 is a glycosylation site (N-linked (GlcNAc...) asparagine). N-linked (GlcNAc...) asparagine glycans are attached at residues Asn-1142, Asn-1160, Asn-1250, Asn-1271, and Asn-1341. Residues 1285–1377 enclose the Ig-like C2-type 10 domain; that stretch reads PARILTFSGT…DEIILNLQVQ (93 aa). A disulfide bond links Cys-1307 and Cys-1359. Fibronectin type-III domains are found at residues 1379 to 1473 and 1474 to 1575; these read PPDQ…TLGK and EPQF…TIPP. Residue Asn-1488 is glycosylated (N-linked (GlcNAc...) asparagine). Residues 1596–1616 form a helical membrane-spanning segment; it reads LVTISCILVGVLLLFVLLLVV. Residues 1617-2012 are Cytoplasmic-facing; it reads RRRRREQRLK…NPYAKSYTLV (396 aa). Residues 1617–2012 are required for netrin-mediated axon repulsion of neuronal growth cones; it reads RRRRREQRLK…NPYAKSYTLV (396 aa). 3 disordered regions span residues 1718–1810, 1855–1883, and 1971–2012; these read LVDV…ASST, TDSL…DGGR, and LPQR…YTLV. Positions 1799 to 1809 are enriched in low complexity; sequence SSMVSTESASS. Over residues 1855 to 1865 the composition is skewed to polar residues; it reads TDSLTSSTPSE.

As to quaternary structure, homodimer; mediates homophilic interactions to promote cell adhesion. Interacts with DCC; the interaction is abolished in response to NTN1. Interacts (via extracellular domain) with NTN1. Interacts (via extracellular domain) with UNC5C (via Ig-like C2-type domain). Interacts with PTK2. Interacts with FYN. Phosphorylated at tyrosine residues. Phosphorylation is enhanced by NTN1. In terms of tissue distribution, primarily expressed in brain.

It localises to the secreted. The protein localises to the cell membrane. It is found in the cell projection. The protein resides in the axon. Its subcellular location is the dendrite. It localises to the growth cone. The protein localises to the synapse. Cell adhesion molecule that plays a role in neuronal self-avoidance. Promotes repulsion between specific neuronal processes of either the same cell or the same subtype of cells. Mediates within retinal amacrine and ganglion cell subtypes both isoneuronal self-avoidance for creating an orderly dendritic arborization and heteroneuronal self-avoidance to maintain the mosaic spacing between amacrine and ganglion cell bodies. Receptor for netrin required for axon guidance independently of and in collaboration with the receptor DCC. Might also collaborate with UNC5C in NTN1-mediated axon repulsion independently of DCC. In spinal cord development plays a role in guiding commissural axons projection and pathfinding across the ventral midline to reach the floor plate upon ligand binding. Mediates intracellular signaling by stimulating the activation of MAPK8 and MAP kinase p38. Adhesion molecule that promotes lamina-specific synaptic connections in the retina: expressed in specific subsets of interneurons and retinal ganglion cells (RGCs) and promotes synaptic connectivity via homophilic interactions. The chain is Cell adhesion molecule DSCAM (DSCAM) from Homo sapiens (Human).